A 253-amino-acid polypeptide reads, in one-letter code: Imidazole glycerol phosphate synthase subunit HisF (253 aa).

Active-site residues include aspartate 11 and aspartate 130.

This sequence belongs to the HisA/HisF family. Heterodimer of HisH and HisF.

The protein resides in the cytoplasm. It catalyses the reaction 5-[(5-phospho-1-deoxy-D-ribulos-1-ylimino)methylamino]-1-(5-phospho-beta-D-ribosyl)imidazole-4-carboxamide + L-glutamine = D-erythro-1-(imidazol-4-yl)glycerol 3-phosphate + 5-amino-1-(5-phospho-beta-D-ribosyl)imidazole-4-carboxamide + L-glutamate + H(+). It participates in amino-acid biosynthesis; L-histidine biosynthesis; L-histidine from 5-phospho-alpha-D-ribose 1-diphosphate: step 5/9. Functionally, IGPS catalyzes the conversion of PRFAR and glutamine to IGP, AICAR and glutamate. The HisF subunit catalyzes the cyclization activity that produces IGP and AICAR from PRFAR using the ammonia provided by the HisH subunit. The chain is Imidazole glycerol phosphate synthase subunit HisF from Thermoanaerobacter sp. (strain X514).